The following is a 135-amino-acid chain: Evasin P1134 (135 aa).

The signal sequence occupies residues 1–31 (MEVKTFAFLQIAVFIALGIQIFAAVTAAADA). Disulfide bonds link cysteine 41/cysteine 63, cysteine 45/cysteine 65, and cysteine 56/cysteine 76. Residue asparagine 44 is glycosylated (N-linked (GlcNAc...) asparagine). The interval 88–112 (ETPSNSDLEAATPRPRKTLYPVRNP) is disordered.

The protein localises to the secreted. Its function is as follows. Salivary chemokine-binding protein which binds to host chemokine CXCL1. The protein is Evasin P1134 of Ixodes ricinus (Common tick).